The primary structure comprises 372 residues: MLSAAFITLLRSGGNQVKKRVLLSSILLQDHRQATPACYFSTSEARCSRFDPDGSGQPATWDNFGIWDNRIDEPILLPPSIKYGKPIPKISLENVGCASLIGKRKENEDRFGFAQLTEEVLYFAVYDGHGGPAAADFCHTHMEKCVMDLLPREKDLETVLTLAFLEIDKAFASYAHLSADASLLTSGTTATVALLRDGVELVVASVGDSRALLCRKGKPMKLTTDHTPERKDEKERIKKFGGFVAWNSLGQPHVNGRLAMTRSIGDLDLKASGVIAEPETTRIKLYHADDSFLVLTTDGINFMVNSQEICDFVNQCHDPKEAAHSVTEQAIQYGTEDNSTAVVVPFGAWGKYKNSEITFSFSRSFASSGRWA.

A mitochondrion-targeting transit peptide spans 1 to 29; the sequence is MLSAAFITLLRSGGNQVKKRVLLSSILLQ. The critical for association with the BCKDH complex stretch occupies residues 46–61; that stretch reads RCSRFDPDGSGQPATW. The PPM-type phosphatase domain occupies 94 to 346; the sequence is NVGCASLIGK…DNSTAVVVPF (253 aa). 2 residues coordinate Mn(2+): Asp127 and Gly128. Ser248 carries the phosphoserine modification. Residues Asp298 and Asp337 each contribute to the Mn(2+) site.

This sequence belongs to the PP2C family. In terms of assembly, monomer. Interacts with E1 and E2 components of the branched-chain alpha-ketoacid dehydrogenase (BCKDH) complex; this interaction requires colocalization in mitochondria. Interacts with BCKDHA but not with BCKDHB of the E1 component. Interacts with the 24-meric E2 core composed of DBT monomers with a 24:1 stoichiometry; the N-terminal region (residues 49-61) of PPM1K and C-terminal linker of the lipoyl domain of DBT (residues 145-160) are critical for this interaction, whereas the lipoyl prosthetic group is dispensable. Competes with BCKDK for binding to the E2 core; this interaction is modulated by branched-chain alpha-keto acids. At steady state, BCKDH holoenzyme preferentially binds BCKDK and BCKDHA is phosphorylated. In response to high levels of branched-chain alpha-keto acids, the inhibitory BCKDK is replaced by activating PPM1K leading to BCKDHA dephosphorylation and BCAA degradation. Requires Mn(2+) as cofactor. Highly expressed in the heart, kidney, brain and liver and to a lesser extent in testis, lung, spleen and adipose tissue. Very low amount in muscle (at protein level). Also expressed in the thymus (at protein level) and the diaphragm. Significantly reduced in hypertrophied hearts.

It localises to the mitochondrion matrix. The catalysed reaction is O-phospho-L-seryl-[3-methyl-2-oxobutanoate dehydrogenase] + H2O = L-seryl-[3-methyl-2-oxobutanoate dehydrogenase] + phosphate. It catalyses the reaction O-phospho-L-seryl-[protein] + H2O = L-seryl-[protein] + phosphate. It functions in the pathway protein modification. Functionally, serine/threonine-protein phosphatase component of macronutrients metabolism. Forms a functional kinase and phosphatase pair with BCKDK, serving as a metabolic regulatory node that coordinates branched-chain amino acids (BCAAs) with glucose and lipid metabolism via two distinct phosphoprotein targets: mitochondrial BCKDHA subunit of the branched-chain alpha-ketoacid dehydrogenase (BCKDH) complex and cytosolic ACLY, a lipogenic enzyme of Krebs cycle. At high levels of branched-chain ketoacids, dephosphorylates and activates mitochondrial BCKDH complex, a multisubunit complex consisting of three multimeric components each involved in different steps of BCAA catabolism: E1 composed of BCKDHA and BCKDHB, E2 core composed of DBT monomers, and E3 composed of DLD monomers. Tightly associates with the E2 component of BCKDH complex and dephosphorylates BCKDHA on Ser-334. Regulates the reversible phosphorylation of ACLY in response to changes in cellular carbohydrate abundance such as occurs during fasting to feeding metabolic transition. At fasting state, appears to dephosphorylate ACLY on Ser-455 and inactivate it. Refeeding stimulates MLXIPL/ChREBP transcription factor, leading to increased BCKDK to PPM1K expression ratio, phosphorylation and activation of ACLY that ultimately results in the generation of malonyl-CoA and oxaloacetate immediate substrates of de novo lipogenesis and gluconeogenesis, respectively. Recognizes phosphosites having SxS or RxxS motifs and strictly depends on Mn(2+) ions for the phosphatase activity. Regulates Ca(2+)-induced opening of mitochondrial transition pore and apoptotic cell death. The sequence is that of Protein phosphatase Mn(2+)-dependent 1K from Mus musculus (Mouse).